Here is a 217-residue protein sequence, read N- to C-terminus: Adapter protein MecA (217 aa).

The protein belongs to the MecA family. As to quaternary structure, homodimer.

Functionally, enables the recognition and targeting of unfolded and aggregated proteins to the ClpC protease or to other proteins involved in proteolysis. The sequence is that of Adapter protein MecA from Listeria monocytogenes serovar 1/2a (strain ATCC BAA-679 / EGD-e).